Here is a 538-residue protein sequence, read N- to C-terminus: Bifunctional purine biosynthesis protein PurH (538 aa).

The 151-residue stretch at 8–158 (IPAPDKVEIK…KNHAYVTILT (151 aa)) folds into the MGS-like domain.

This sequence belongs to the PurH family.

The catalysed reaction is (6R)-10-formyltetrahydrofolate + 5-amino-1-(5-phospho-beta-D-ribosyl)imidazole-4-carboxamide = 5-formamido-1-(5-phospho-D-ribosyl)imidazole-4-carboxamide + (6S)-5,6,7,8-tetrahydrofolate. It carries out the reaction IMP + H2O = 5-formamido-1-(5-phospho-D-ribosyl)imidazole-4-carboxamide. It participates in purine metabolism; IMP biosynthesis via de novo pathway; 5-formamido-1-(5-phospho-D-ribosyl)imidazole-4-carboxamide from 5-amino-1-(5-phospho-D-ribosyl)imidazole-4-carboxamide (10-formyl THF route): step 1/1. It functions in the pathway purine metabolism; IMP biosynthesis via de novo pathway; IMP from 5-formamido-1-(5-phospho-D-ribosyl)imidazole-4-carboxamide: step 1/1. In Rhizobium leguminosarum bv. trifolii (strain WSM2304), this protein is Bifunctional purine biosynthesis protein PurH.